Consider the following 295-residue polypeptide: MNFQELILTLNKFWAEQNCIIQQPYDIEKGAGTMNPATFLRALGPEPWRVAYVEPSRRPTDGRYGENPNRLQHYFQYQVILKPSPDDVIPVYLDSLRAIGIDPDKHDIRFVEDNWESPTLGAWGLGWEVWLDGMEVTQFTYFQQCGGIDCHPVSAEITYGLERLAMFIQQKDSVYDITWVGDITYGDVYHQNEVEQSGYNFEVANTEMLFDLFDMYEAEANHILEKGLVLPAYDYVLKCSHTFNLLDARGAISVSERQGFIARVRQMARACAHAYVEQREKLGFPLLKKGGNING.

The protein belongs to the class-II aminoacyl-tRNA synthetase family. Tetramer of two alpha and two beta subunits.

It is found in the cytoplasm. The catalysed reaction is tRNA(Gly) + glycine + ATP = glycyl-tRNA(Gly) + AMP + diphosphate. The sequence is that of Glycine--tRNA ligase alpha subunit from Desulforamulus reducens (strain ATCC BAA-1160 / DSM 100696 / MI-1) (Desulfotomaculum reducens).